The following is a 197-amino-acid chain: Putative NADH dehydrogenase/NAD(P)H nitroreductase Plav_3612 (197 aa).

The protein belongs to the nitroreductase family. HadB/RutE subfamily. The cofactor is FMN.

This chain is Putative NADH dehydrogenase/NAD(P)H nitroreductase Plav_3612, found in Parvibaculum lavamentivorans (strain DS-1 / DSM 13023 / NCIMB 13966).